The chain runs to 249 residues: Probable transcriptional regulatory protein mll3945 (249 aa).

It belongs to the TACO1 family.

It localises to the cytoplasm. The chain is Probable transcriptional regulatory protein mll3945 from Mesorhizobium japonicum (strain LMG 29417 / CECT 9101 / MAFF 303099) (Mesorhizobium loti (strain MAFF 303099)).